A 79-amino-acid polypeptide reads, in one-letter code: Small ribosomal subunit protein bS21A (79 aa).

The interval 57–79 (LARKKLQREGLLPAPKKVLRPTR) is disordered.

Belongs to the bacterial ribosomal protein bS21 family.

In Rhizobium johnstonii (strain DSM 114642 / LMG 32736 / 3841) (Rhizobium leguminosarum bv. viciae), this protein is Small ribosomal subunit protein bS21A.